The sequence spans 271 residues: Glutamate racemase (271 aa).

Substrate is bound by residues 10–11 (DS) and 42–43 (YG). Cysteine 73 (proton donor/acceptor) is an active-site residue. Residue 74 to 75 (NT) coordinates substrate. The active-site Proton donor/acceptor is cysteine 183. 184–185 (TH) is a binding site for substrate.

It belongs to the aspartate/glutamate racemases family.

The catalysed reaction is L-glutamate = D-glutamate. It participates in cell wall biogenesis; peptidoglycan biosynthesis. Provides the (R)-glutamate required for cell wall biosynthesis. The sequence is that of Glutamate racemase from Streptococcus thermophilus (strain ATCC BAA-250 / LMG 18311).